A 331-amino-acid polypeptide reads, in one-letter code: Polyprenyl transferase mpaA' (331 aa).

8 helical membrane passes run 27 to 47 (MPYY…ALKL), 56 to 76 (IEFI…LCGA), 127 to 147 (LILD…SIML), 159 to 179 (VFVY…ITGW), 190 to 210 (GDII…CVYF), 240 to 260 (LFLA…ISTI), 264 to 284 (WLWV…IAQF), and 295 to 315 (IHWD…VEVG).

The protein belongs to the UbiA prenyltransferase family. Mg(2+) serves as cofactor.

The protein resides in the golgi apparatus membrane. It catalyses the reaction 5,7-dihydroxy-4-methylphthalide + (2E,6E)-farnesyl diphosphate = 4-farnesyl-3,5-dihydroxy-6-methylphthalide + diphosphate. Its pathway is secondary metabolite biosynthesis; terpenoid biosynthesis. In terms of biological role, polyprenyl transferase; part of the gene cluster that mediates the biosynthesis of mycophenolic acid (MPA), the first isolated antibiotic natural product in the world obtained from a culture of Penicillium brevicompactum in 1893. MpaA' is a Golgi apparatus-associated enzyme that catalyzes the prenylation of 5,7-dihydroxy-4,6-dimethylphthalide (DHMP) to yield farnesyl-DHMP (FDHMP). The first step of the pathway is the synthesis of 5-methylorsellinic acid (5MOA) by the cytosolic polyketide synthase mpaC. 5MOA is then converted to the phthalide compound 5,7-dihydroxy-4,6-dimethylphthalide (DHMP) by the endoplasmic reticulum-bound cytochrome P450 monooxygenase mpaDE. MpaDE first catalyzes hydroxylation of 5-MOA to 4,6-dihydroxy-2-(hydroxymethyl)-3-methylbenzoic acid (DHMB). MpaDE then acts as a lactone synthase that catalyzes the ring closure to convert DHMB into DHMP. The next step is the prenylation of DHMP by the Golgi apparatus-associated prenyltransferase mpaA to yield farnesyl-DHMP (FDHMP). The ER-bound oxygenase mpaB then mediates the oxidative cleavage the C19-C20 double bond in FDHMP to yield FDHMP-3C via a mycophenolic aldehyde intermediate. The O-methyltransferase mpaG catalyzes the methylation of FDHMP-3C to yield MFDHMP-3C. After the cytosolic methylation of FDHMP-3C, MFDHMP-3C enters into peroxisomes probably via free diffusion due to its low molecular weight. Upon a peroxisomal CoA ligation reaction, catalyzed by a beta-oxidation component enzyme acyl-CoA ligase ACL891, MFDHMP-3C-CoA would then be restricted to peroxisomes for the following beta-oxidation pathway steps. The peroxisomal beta-oxidation machinery than converts MFDHMP-3C-CoA into MPA_CoA, via a beta-oxidation chain-shortening process. Finally mpaH acts as a peroxisomal acyl-CoA hydrolase with high substrate specificity toward MPA-CoA to release the final product MPA. In Penicillium brevicompactum, this protein is Polyprenyl transferase mpaA'.